We begin with the raw amino-acid sequence, 261 residues long: 5'-nucleotidase SurE (261 aa).

The a divalent metal cation site is built by Asp18, Asp19, Ser50, and Asn102.

The protein belongs to the SurE nucleotidase family. A divalent metal cation serves as cofactor.

It localises to the cytoplasm. The catalysed reaction is a ribonucleoside 5'-phosphate + H2O = a ribonucleoside + phosphate. Its function is as follows. Nucleotidase that shows phosphatase activity on nucleoside 5'-monophosphates. The polypeptide is 5'-nucleotidase SurE (Rhodospirillum rubrum (strain ATCC 11170 / ATH 1.1.1 / DSM 467 / LMG 4362 / NCIMB 8255 / S1)).